The following is a 520-amino-acid chain: TnpB-like protein L770 (520 aa).

The interval 23 to 44 (KTKKKVFVKKKPPDKKPLKKPV) is disordered. The Zn(2+) site is built by cysteine 474, cysteine 477, cysteine 491, and cysteine 494.

It in the central section; belongs to the transposase 2 family. The protein in the C-terminal section; belongs to the transposase 35 family.

In Acanthamoeba polyphaga mimivirus (APMV), this protein is TnpB-like protein L770.